A 272-amino-acid polypeptide reads, in one-letter code: Indole-3-glycerol phosphate synthase (272 aa).

Belongs to the TrpC family.

The enzyme catalyses 1-(2-carboxyphenylamino)-1-deoxy-D-ribulose 5-phosphate + H(+) = (1S,2R)-1-C-(indol-3-yl)glycerol 3-phosphate + CO2 + H2O. Its pathway is amino-acid biosynthesis; L-tryptophan biosynthesis; L-tryptophan from chorismate: step 4/5. The polypeptide is Indole-3-glycerol phosphate synthase (Mycolicibacterium smegmatis (strain ATCC 700084 / mc(2)155) (Mycobacterium smegmatis)).